Consider the following 498-residue polypeptide: NAC domain-containing protein 75 (498 aa).

The NAC domain maps to L48–Q215. The DNA-binding element occupies K166–C221. 4 disordered regions span residues S225–S278, V338–H374, Q423–S443, and S457–G498. Residues I233 to E248 are compositionally biased toward gly residues. Residues G256–S266 show a composition bias toward low complexity. Residues H356–H374 are compositionally biased toward basic residues. Over residues G466 to E475 the composition is skewed to polar residues.

Expressed in the vascular cylinder of roots. Expressed in the differentiation zone of the root stele.

It localises to the nucleus. Functionally, transcription activator involved in xylem formation. Promotes the expression of the secondary wall-associated transcription factor MYB46. Functions upstream of NAC030/VND7, a master switch of xylem vessel differentiation. Acts as a upstream regulator of NAC101/VND6 and LBD30/ASL19. This chain is NAC domain-containing protein 75, found in Arabidopsis thaliana (Mouse-ear cress).